Here is a 131-residue protein sequence, read N- to C-terminus: Small ribosomal subunit protein uS11 (131 aa).

The protein belongs to the universal ribosomal protein uS11 family. As to quaternary structure, part of the 30S ribosomal subunit. Interacts with proteins S7 and S18. Binds to IF-3.

In terms of biological role, located on the platform of the 30S subunit, it bridges several disparate RNA helices of the 16S rRNA. Forms part of the Shine-Dalgarno cleft in the 70S ribosome. This chain is Small ribosomal subunit protein uS11, found in Geobacter metallireducens (strain ATCC 53774 / DSM 7210 / GS-15).